A 377-amino-acid polypeptide reads, in one-letter code: NADH dehydrogenase [ubiquinone] 1 alpha subcomplex subunit 9, mitochondrial (377 aa).

A mitochondrion-targeting transit peptide spans 1-35 (MAAAAQSRVVRVLSMSRSAITAIATSVCHGPPCRQ). Residue Lys175 is modified to N6-succinyllysine. 2 positions are modified to N6-acetyllysine: Lys189 and Lys370.

Belongs to the complex I NDUFA9 subunit family. As to quaternary structure, complex I is composed of 45 different subunits. This a component of the hydrophobic protein fraction. Interacts with BLOC1S1. Interacts with SLC2A4. Interacts with CLOCK. Interacts with RAB5IF. The cofactor is FAD. In terms of processing, acetylated on lysine residues. BLOC1S1 is required for acetylation.

It localises to the mitochondrion matrix. Functionally, accessory subunit of the mitochondrial membrane respiratory chain NADH dehydrogenase (Complex I), that is believed not to be involved in catalysis. Complex I functions in the transfer of electrons from NADH to the respiratory chain. The immediate electron acceptor for the enzyme is believed to be ubiquinone. The polypeptide is NADH dehydrogenase [ubiquinone] 1 alpha subcomplex subunit 9, mitochondrial (NDUFA9) (Gorilla gorilla gorilla (Western lowland gorilla)).